A 393-amino-acid polypeptide reads, in one-letter code: Endoglucanase 1 (393 aa).

The N-terminal stretch at 1–26 is a signal peptide; the sequence is MAFKLNIGLLALSLSLSLVHLDGVRA. The Nucleophile role is filled by Asp-34. Residue Asp-152 is the Proton donor of the active site. The disordered stretch occupies residues 233–393; that stretch reads GCQRKDDNTI…GGHKKCHKKH (161 aa). Composition is skewed to low complexity over residues 319 to 329 and 337 to 370; these read QGSSNGDATTG and DSGS…NPGA. N-linked (GlcNAc...) asparagine glycosylation occurs at Asn-343. The segment covering 371 to 384 has biased composition (gly residues); that stretch reads AQGGQGGAQPGPSG.

It belongs to the glycosyl hydrolase 45 (cellulase K) family. May also be O-glycosylated. As to expression, hyphal tip.

The protein resides in the secreted. It carries out the reaction Endohydrolysis of (1-&gt;4)-beta-D-glucosidic linkages in cellulose, lichenin and cereal beta-D-glucans.. This chain is Endoglucanase 1 (EGL1), found in Mycosarcoma maydis (Corn smut fungus).